Reading from the N-terminus, the 238-residue chain is Ribonuclease PH (238 aa).

Phosphate-binding positions include Arg-86 and 124–126 (GTR).

This sequence belongs to the RNase PH family. Homohexameric ring arranged as a trimer of dimers.

It carries out the reaction tRNA(n+1) + phosphate = tRNA(n) + a ribonucleoside 5'-diphosphate. Its function is as follows. Phosphorolytic 3'-5' exoribonuclease that plays an important role in tRNA 3'-end maturation. Removes nucleotide residues following the 3'-CCA terminus of tRNAs; can also add nucleotides to the ends of RNA molecules by using nucleoside diphosphates as substrates, but this may not be physiologically important. Probably plays a role in initiation of 16S rRNA degradation (leading to ribosome degradation) during starvation. In Aliivibrio fischeri (strain ATCC 700601 / ES114) (Vibrio fischeri), this protein is Ribonuclease PH.